Reading from the N-terminus, the 482-residue chain is Beta-1,3-glucan-binding protein 2 (482 aa).

An N-terminal signal peptide occupies residues 1 to 18; sequence MWIKSVCLFATIAGCLGQ. A CBM39 domain is found at 23–122; sequence YKVPDAKLEA…GEWTVTEFVN (100 aa). N-linked (GlcNAc...) asparagine glycosylation is present at Asn124. Positions 127–153 are disordered; it reads VVDTSTAPPPVAPAVSEEDQSPGPQWR. The 355-residue stretch at 128–482 folds into the GH16 domain; it reads VDTSTAPPPV…KVDYVRVYAL (355 aa). N-linked (GlcNAc...) asparagine glycosylation occurs at Asn189.

In terms of assembly, monomer. N-glycosylated. Cuticle and fat body.

The protein localises to the secreted. Its function is as follows. Involved in the recognition of invading microorganisms. Binds specifically to beta-1,3-glucan and lipoteichoic acid and causes aggregation of invading microorganisms. Binding to beta-1,3-glucan activates the phenoloxidase cascade. The sequence is that of Beta-1,3-glucan-binding protein 2 from Manduca sexta (Tobacco hawkmoth).